The sequence spans 481 residues: Sphingosine kinase 2 (481 aa).

One can recognise a DAGKc domain in the interval 111–253; the sequence is GRPKRLLVFV…VDVATIAQGN (143 aa). ATP is bound by residues 121 to 123 and threonine 153; that span reads NPF. 178 to 181 lines the substrate pocket; the sequence is SGDG. Catalysis depends on aspartate 180, which acts as the Proton donor/acceptor. ATP-binding positions include glutamate 185 and 210–212; that span reads GTG. Aspartate 271 serves as a coordination point for substrate. ATP-binding positions include arginine 278, arginine 284, and 441–443; that span reads DGE.

The cofactor is Mg(2+). As to expression, highly expressed in flowers and siliques and at lower levels in roots, leaves and stems.

It localises to the vacuole membrane. The enzyme catalyses a sphingoid base + ATP = a sphingoid 1-phosphate + ADP + H(+). Its activity is regulated as follows. Activated by phosphatidic acid (PA). Binding with PA stimulates the activity by promoting the binding of substrate to the catalytic site. Functionally, involved in the production of sphingolipid metabolites. Phosphorylates sphingosine and various l sphingoid long-chain base (LCB) products, such as phytosphingosine (PHS, 4-hydroxysphinganine), 4-hydroxy-8-sphingenine, 4,8-sphingadienine and D-erythro-dihydrosphingosine, but has a very few activity toward D,L-threo- dihydrosphingosine. Is required for abscisic acid (ABA) signaling that mediates stomatal closure, inhibition of seed germination and root elongation. May function upstream of PLDALPHA1 and phosphatidic acid (PA) in an amplification response to ABA that mediates stomatal closure. This is Sphingosine kinase 2 (SPHK2) from Arabidopsis thaliana (Mouse-ear cress).